Reading from the N-terminus, the 268-residue chain is uncharacterized protein (268 aa).

Positions S45–A64 are disordered.

This is an uncharacterized protein from Aquifex aeolicus (strain VF5).